The primary structure comprises 488 residues: Phenylalanine--tRNA ligase alpha subunit (488 aa).

L-phenylalanine is bound by residues threonine 315, 354-356, phenylalanine 394, and phenylalanine 419; that span reads QLD.

The protein belongs to the class-II aminoacyl-tRNA synthetase family. Phe-tRNA synthetase alpha subunit type 2 subfamily. In terms of assembly, tetramer of two alpha and two beta subunits. The cofactor is Mg(2+).

It is found in the cytoplasm. The enzyme catalyses tRNA(Phe) + L-phenylalanine + ATP = L-phenylalanyl-tRNA(Phe) + AMP + diphosphate + H(+). The protein is Phenylalanine--tRNA ligase alpha subunit of Pyrobaculum calidifontis (strain DSM 21063 / JCM 11548 / VA1).